The chain runs to 633 residues: ATP-dependent clpX-like chaperone, mitochondrial (633 aa).

The transit peptide at 1–56 directs the protein to the mitochondrion; the sequence is MPSCGACTCGAAAVRLITSSLASAQRGISGGRIHMSVLGRLGTFETQILQRAPLRS. Residues 68-100 form a disordered region; that stretch reads DGISKDGSGDGNKKSASEGSSKKSGSGNSGKGG. Positions 69-83 are enriched in basic and acidic residues; the sequence is GISKDGSGDGNKKSA. Positions 84–93 are enriched in low complexity; that stretch reads SEGSSKKSGS. The ClpX-type ZB domain maps to 93-146; the sequence is SGNSGKGGNQLRCPKCGDLCTHVETFVSSTRFVKCEKCHHFFVVLSEADSKKSI. Positions 105, 108, 127, and 130 each coordinate Zn(2+). 294–301 serves as a coordination point for ATP; that stretch reads PTGSGKTL. K437 bears the N6-acetyllysine mark. Residues 598–610 are compositionally biased toward basic and acidic residues; sequence KEPGYIRAPTKES. The segment at 598 to 633 is disordered; sequence KEPGYIRAPTKESSEEEYDSGVEEEGWPRQADAANS. The span at 611-622 shows a compositional bias: acidic residues; that stretch reads SEEEYDSGVEEE. S617 bears the Phosphoserine mark.

It belongs to the ClpX chaperone family. Homohexamer that forms a ring structure; this hexamerization requires ATP binding. Component of the ClpXP complex formed by the assembly of two CLPP heptameric rings with two CLPX hexameric rings, giving rise to a symmetrical structure with two central CLPP rings flanked by a CLPX ring at either end of the complex. Interacts with TFAM. Higher expression in skeletal muscle and heart and to a lesser extent in liver, brain, placenta, lung, kidney and pancreas.

It is found in the mitochondrion. Its subcellular location is the mitochondrion matrix. The protein resides in the mitochondrion nucleoid. It catalyses the reaction ATP + H2O = ADP + phosphate + H(+). Its function is as follows. ATP-dependent chaperone that functions as an unfoldase. As part of the ClpXP protease complex, it recognizes specific protein substrates, unfolds them using energy derived from ATP hydrolysis, and then translocates them to the proteolytic subunit (CLPP) of the ClpXP complex for degradation. Thanks to its chaperone activity, it also functions in the incorporation of the pyridoxal phosphate cofactor into 5-aminolevulinate synthase, thereby activating 5-aminolevulinate (ALA) synthesis, the first step in heme biosynthesis. This chaperone is also involved in the control of mtDNA nucleoid distribution, by regulating mitochondrial transcription factor A (TFAM) activity. In Homo sapiens (Human), this protein is ATP-dependent clpX-like chaperone, mitochondrial.